Here is a 229-residue protein sequence, read N- to C-terminus: Large ribosomal subunit protein uL1 (229 aa).

It belongs to the universal ribosomal protein uL1 family. As to quaternary structure, part of the 50S ribosomal subunit.

In terms of biological role, binds directly to 23S rRNA. The L1 stalk is quite mobile in the ribosome, and is involved in E site tRNA release. Functionally, protein L1 is also a translational repressor protein, it controls the translation of the L11 operon by binding to its mRNA. In Leifsonia xyli subsp. xyli (strain CTCB07), this protein is Large ribosomal subunit protein uL1.